Here is a 218-residue protein sequence, read N- to C-terminus: Thiopurine S-methyltransferase (218 aa).

S-adenosyl-L-methionine-binding residues include Trp11, Leu46, Glu67, and Arg122.

This sequence belongs to the class I-like SAM-binding methyltransferase superfamily. TPMT family.

The protein localises to the cytoplasm. It catalyses the reaction S-adenosyl-L-methionine + a thiopurine = S-adenosyl-L-homocysteine + a thiopurine S-methylether.. The sequence is that of Thiopurine S-methyltransferase from Vibrio cholerae serotype O1 (strain ATCC 39315 / El Tor Inaba N16961).